A 453-amino-acid polypeptide reads, in one-letter code: UDP-N-acetylmuramoylalanine--D-glutamate ligase (453 aa).

115 to 121 (GTNGKTT) is a binding site for ATP.

Belongs to the MurCDEF family.

Its subcellular location is the cytoplasm. The catalysed reaction is UDP-N-acetyl-alpha-D-muramoyl-L-alanine + D-glutamate + ATP = UDP-N-acetyl-alpha-D-muramoyl-L-alanyl-D-glutamate + ADP + phosphate + H(+). The protein operates within cell wall biogenesis; peptidoglycan biosynthesis. Its function is as follows. Cell wall formation. Catalyzes the addition of glutamate to the nucleotide precursor UDP-N-acetylmuramoyl-L-alanine (UMA). The protein is UDP-N-acetylmuramoylalanine--D-glutamate ligase of Geotalea uraniireducens (strain Rf4) (Geobacter uraniireducens).